Consider the following 59-residue polypeptide: Small ribosomal subunit protein bS21 (59 aa).

It belongs to the bacterial ribosomal protein bS21 family.

The sequence is that of Small ribosomal subunit protein bS21 from Acaryochloris marina (strain MBIC 11017).